A 969-amino-acid chain; its full sequence is RNA polymerase-associated protein RapA (969 aa).

One can recognise a Helicase ATP-binding domain in the interval 164-334 (EVGRRHAPRV…FARLRLLDAD (171 aa)). Residue 177-184 (DEVGLGKT) participates in ATP binding. Positions 280–283 (DEAH) match the DEAH box motif. The Helicase C-terminal domain maps to 492 to 646 (RVNWLLEKVK…TCPTGRAVYD (155 aa)).

It belongs to the SNF2/RAD54 helicase family. RapA subfamily. Interacts with the RNAP. Has a higher affinity for the core RNAP than for the holoenzyme. Its ATPase activity is stimulated by binding to RNAP.

Transcription regulator that activates transcription by stimulating RNA polymerase (RNAP) recycling in case of stress conditions such as supercoiled DNA or high salt concentrations. Probably acts by releasing the RNAP, when it is trapped or immobilized on tightly supercoiled DNA. Does not activate transcription on linear DNA. Probably not involved in DNA repair. This Vibrio cholerae serotype O1 (strain ATCC 39315 / El Tor Inaba N16961) protein is RNA polymerase-associated protein RapA.